Consider the following 192-residue polypeptide: Protein CREG1 (192 aa).

Residues 1 to 18 form the signal peptide; it reads MVLLAFLCAAALAALARG. Residues Asn-95, Asn-133, and Asn-166 are each glycosylated (N-linked (GlcNAc...) asparagine).

The protein belongs to the CREG family.

The protein resides in the secreted. Its function is as follows. May contribute to the transcriptional control of cell growth and differentiation. This is Protein CREG1 (CREG1) from Gallus gallus (Chicken).